We begin with the raw amino-acid sequence, 325 residues long: tRNA(Ile)-lysidine synthase (325 aa).

ATP is bound at residue 34 to 39; it reads SGGQDS.

Belongs to the tRNA(Ile)-lysidine synthase family.

The protein localises to the cytoplasm. The enzyme catalyses cytidine(34) in tRNA(Ile2) + L-lysine + ATP = lysidine(34) in tRNA(Ile2) + AMP + diphosphate + H(+). Ligates lysine onto the cytidine present at position 34 of the AUA codon-specific tRNA(Ile) that contains the anticodon CAU, in an ATP-dependent manner. Cytidine is converted to lysidine, thus changing the amino acid specificity of the tRNA from methionine to isoleucine. The polypeptide is tRNA(Ile)-lysidine synthase (Synechococcus sp. (strain ATCC 27144 / PCC 6301 / SAUG 1402/1) (Anacystis nidulans)).